Reading from the N-terminus, the 249-residue chain is 5'-nucleotidase SurE (249 aa).

Residues Asp8, Asp9, Ser39, and Asn91 each coordinate a divalent metal cation.

It belongs to the SurE nucleotidase family. It depends on a divalent metal cation as a cofactor.

It is found in the cytoplasm. It carries out the reaction a ribonucleoside 5'-phosphate + H2O = a ribonucleoside + phosphate. Its function is as follows. Nucleotidase that shows phosphatase activity on nucleoside 5'-monophosphates. The polypeptide is 5'-nucleotidase SurE (Haemophilus influenzae (strain ATCC 51907 / DSM 11121 / KW20 / Rd)).